Here is a 218-residue protein sequence, read N- to C-terminus: Pyrrolidone-carboxylate peptidase (218 aa).

Residues Glu-81, Cys-144, and His-169 contribute to the active site.

The protein belongs to the peptidase C15 family. In terms of assembly, homotetramer.

The protein localises to the cytoplasm. The enzyme catalyses Release of an N-terminal pyroglutamyl group from a polypeptide, the second amino acid generally not being Pro.. Removes 5-oxoproline from various penultimate amino acid residues except L-proline. The sequence is that of Pyrrolidone-carboxylate peptidase (pcp) from Deinococcus radiodurans (strain ATCC 13939 / DSM 20539 / JCM 16871 / CCUG 27074 / LMG 4051 / NBRC 15346 / NCIMB 9279 / VKM B-1422 / R1).